A 159-amino-acid polypeptide reads, in one-letter code: 2-C-methyl-D-erythritol 2,4-cyclodiphosphate synthase (159 aa).

A divalent metal cation contacts are provided by D10 and H12. 4-CDP-2-C-methyl-D-erythritol 2-phosphate-binding positions include 10–12 (DVH) and 36–37 (HS). H44 serves as a coordination point for a divalent metal cation. Residues 58-60 (DIG), 63-67 (FSDTD), and R144 each bind 4-CDP-2-C-methyl-D-erythritol 2-phosphate.

The protein belongs to the IspF family. In terms of assembly, homotrimer. A divalent metal cation serves as cofactor.

It carries out the reaction 4-CDP-2-C-methyl-D-erythritol 2-phosphate = 2-C-methyl-D-erythritol 2,4-cyclic diphosphate + CMP. Its pathway is isoprenoid biosynthesis; isopentenyl diphosphate biosynthesis via DXP pathway; isopentenyl diphosphate from 1-deoxy-D-xylulose 5-phosphate: step 4/6. Involved in the biosynthesis of isopentenyl diphosphate (IPP) and dimethylallyl diphosphate (DMAPP), two major building blocks of isoprenoid compounds. Catalyzes the conversion of 4-diphosphocytidyl-2-C-methyl-D-erythritol 2-phosphate (CDP-ME2P) to 2-C-methyl-D-erythritol 2,4-cyclodiphosphate (ME-CPP) with a corresponding release of cytidine 5-monophosphate (CMP). This chain is 2-C-methyl-D-erythritol 2,4-cyclodiphosphate synthase, found in Paraburkholderia xenovorans (strain LB400).